The chain runs to 237 residues: Phosphoribosylaminoimidazole-succinocarboxamide synthase (237 aa).

The protein belongs to the SAICAR synthetase family.

The catalysed reaction is 5-amino-1-(5-phospho-D-ribosyl)imidazole-4-carboxylate + L-aspartate + ATP = (2S)-2-[5-amino-1-(5-phospho-beta-D-ribosyl)imidazole-4-carboxamido]succinate + ADP + phosphate + 2 H(+). It functions in the pathway purine metabolism; IMP biosynthesis via de novo pathway; 5-amino-1-(5-phospho-D-ribosyl)imidazole-4-carboxamide from 5-amino-1-(5-phospho-D-ribosyl)imidazole-4-carboxylate: step 1/2. The chain is Phosphoribosylaminoimidazole-succinocarboxamide synthase from Deinococcus deserti (strain DSM 17065 / CIP 109153 / LMG 22923 / VCD115).